The chain runs to 281 residues: Protein synthesis inhibitor I (281 aa).

Residue alanine 2 is modified to N-acetylalanine. Glutamate 175 is an active-site residue.

This sequence belongs to the ribosome-inactivating protein family. Type 1 RIP subfamily.

The protein resides in the cytoplasm. It carries out the reaction Endohydrolysis of the N-glycosidic bond at one specific adenosine on the 28S rRNA.. In terms of biological role, inhibits the elongation phase of protein synthesis. It inactivates fungal ribosomes even more effectively than mammalian ribosomes and is thought to function as a constitutive antifungal agent in plants. The chain is Protein synthesis inhibitor I (RIP30) from Hordeum vulgare (Barley).